The chain runs to 600 residues: Elongation factor 4 (600 aa).

The 183-residue stretch at 5–187 (KYIRNFSIVA…EIVEKIPAPE (183 aa)) folds into the tr-type G domain. GTP is bound by residues 17–22 (DHGKST) and 134–137 (NKVD).

It belongs to the TRAFAC class translation factor GTPase superfamily. Classic translation factor GTPase family. LepA subfamily.

The protein localises to the cell membrane. It catalyses the reaction GTP + H2O = GDP + phosphate + H(+). Functionally, required for accurate and efficient protein synthesis under certain stress conditions. May act as a fidelity factor of the translation reaction, by catalyzing a one-codon backward translocation of tRNAs on improperly translocated ribosomes. Back-translocation proceeds from a post-translocation (POST) complex to a pre-translocation (PRE) complex, thus giving elongation factor G a second chance to translocate the tRNAs correctly. Binds to ribosomes in a GTP-dependent manner. This chain is Elongation factor 4, found in Clostridium perfringens (strain 13 / Type A).